A 62-amino-acid chain; its full sequence is Photosystem II reaction center protein Z (62 aa).

2 helical membrane-spanning segments follow: residues 8 to 28 (VLTALVFFSFVMVVAVPVAYA) and 41 to 61 (YVGSAIWIGLVLLVAILNFLV).

This sequence belongs to the PsbZ family. In terms of assembly, PSII is composed of 1 copy each of membrane proteins PsbA, PsbB, PsbC, PsbD, PsbE, PsbF, PsbH, PsbI, PsbJ, PsbK, PsbL, PsbM, PsbT, PsbX, PsbY, PsbZ, Psb30/Ycf12, peripheral proteins PsbO, CyanoQ (PsbQ), PsbU, PsbV and a large number of cofactors. It forms dimeric complexes.

The protein localises to the cellular thylakoid membrane. In terms of biological role, may control the interaction of photosystem II (PSII) cores with the light-harvesting antenna, regulates electron flow through the 2 photosystem reaction centers. PSII is a light-driven water plastoquinone oxidoreductase, using light energy to abstract electrons from H(2)O, generating a proton gradient subsequently used for ATP formation. The chain is Photosystem II reaction center protein Z from Crocosphaera subtropica (strain ATCC 51142 / BH68) (Cyanothece sp. (strain ATCC 51142)).